The chain runs to 412 residues: MDGRTLGLWLLPPVVGGIIGYFTNDLAIRMLFRPYRPVVIGGWQLPFTPGLIPANQGRLARRIADAILGSLLTPDALHDLARRLLELPRLEAAIAWLVSLLLERLREVRDPRSIEVAADVLRDLAGSALPRWLRAIVRQRQGLDAQIDRWFEQQLLSQKLGPLQAQQLGDWLLEGAFPPDQIRRVMLDFLTDDNIRNLDRIVRDRTRGTDWVIANLFGVQSSLQRLRQFLREQPEAGDAVIAELSQRLALRQQLSQALQTFQLTDLPQTTLTDLRLQLRQGLRQWLDQDGLSLLEGALGGLDWTAAARALLDRLRTAVISDEAIAAFRHEVALILDQRLEHELEDLVAAALPILALEDLIIGRVEATPAADLEAAIQGIVRSELQAIVNIGGVLGVLLGCVQSLINVWSLST.

The next 2 membrane-spanning stretches (helical) occupy residues 8-28 (LWLLPPVVGGIIGYFTNDLAI) and 390-410 (IGGVLGVLLGCVQSLINVWSL).

This sequence belongs to the UPF0754 family.

The protein localises to the cell inner membrane. This is UPF0754 membrane protein syc0451_d from Synechococcus sp. (strain ATCC 27144 / PCC 6301 / SAUG 1402/1) (Anacystis nidulans).